A 414-amino-acid polypeptide reads, in one-letter code: Glucose-1-phosphate adenylyltransferase (414 aa).

Alpha-D-glucose 1-phosphate contacts are provided by residues tyrosine 103, glycine 168, 183–184, and serine 201; that span reads EK.

The protein belongs to the bacterial/plant glucose-1-phosphate adenylyltransferase family. As to quaternary structure, homotetramer.

The catalysed reaction is alpha-D-glucose 1-phosphate + ATP + H(+) = ADP-alpha-D-glucose + diphosphate. It functions in the pathway glycan biosynthesis; glycogen biosynthesis. In terms of biological role, involved in the biosynthesis of ADP-glucose, a building block required for the elongation reactions to produce glycogen. Catalyzes the reaction between ATP and alpha-D-glucose 1-phosphate (G1P) to produce pyrophosphate and ADP-Glc. This is Glucose-1-phosphate adenylyltransferase from Thermus caldophilus.